Here is a 253-residue protein sequence, read N- to C-terminus: Triosephosphate isomerase (253 aa).

Residue 8–10 (NWK) coordinates substrate. Residue His93 is the Electrophile of the active site. Glu165 serves as the catalytic Proton acceptor. Substrate-binding positions include Gly171, Ser210, and 231–232 (GG).

It belongs to the triosephosphate isomerase family. As to quaternary structure, homodimer.

The protein localises to the cytoplasm. It catalyses the reaction D-glyceraldehyde 3-phosphate = dihydroxyacetone phosphate. It participates in carbohydrate biosynthesis; gluconeogenesis. Its pathway is carbohydrate degradation; glycolysis; D-glyceraldehyde 3-phosphate from glycerone phosphate: step 1/1. Its function is as follows. Involved in the gluconeogenesis. Catalyzes stereospecifically the conversion of dihydroxyacetone phosphate (DHAP) to D-glyceraldehyde-3-phosphate (G3P). This chain is Triosephosphate isomerase, found in Francisella tularensis subsp. novicida (strain U112).